The following is a 247-amino-acid chain: tRNA pseudouridine synthase A (247 aa).

The Nucleophile role is filled by Asp-52. Tyr-113 serves as a coordination point for substrate.

Belongs to the tRNA pseudouridine synthase TruA family. As to quaternary structure, homodimer.

It carries out the reaction uridine(38/39/40) in tRNA = pseudouridine(38/39/40) in tRNA. Its function is as follows. Formation of pseudouridine at positions 38, 39 and 40 in the anticodon stem and loop of transfer RNAs. The chain is tRNA pseudouridine synthase A from Bartonella bacilliformis (strain ATCC 35685 / KC583 / Herrer 020/F12,63).